The chain runs to 85 residues: MAIFKSISSISNSTGSMGSSIGASNLDGFVSNDNSISCFDGCCGGGLGGWGGFNGLGGFNGGCGGSNTNIINLDIDIGRRRRRCC.

The protein belongs to the UPF0512 family.

The polypeptide is UPF0512 protein R (Dictyostelium discoideum (Social amoeba)).